A 247-amino-acid chain; its full sequence is PF03932 family protein CutC (247 aa).

The protein belongs to the CutC family.

It localises to the cytoplasm. The sequence is that of PF03932 family protein CutC from Vibrio parahaemolyticus serotype O3:K6 (strain RIMD 2210633).